A 345-amino-acid chain; its full sequence is S-adenosylmethionine:tRNA ribosyltransferase-isomerase (345 aa).

This sequence belongs to the QueA family. In terms of assembly, monomer.

It is found in the cytoplasm. It catalyses the reaction 7-aminomethyl-7-carbaguanosine(34) in tRNA + S-adenosyl-L-methionine = epoxyqueuosine(34) in tRNA + adenine + L-methionine + 2 H(+). The protein operates within tRNA modification; tRNA-queuosine biosynthesis. Functionally, transfers and isomerizes the ribose moiety from AdoMet to the 7-aminomethyl group of 7-deazaguanine (preQ1-tRNA) to give epoxyqueuosine (oQ-tRNA). The chain is S-adenosylmethionine:tRNA ribosyltransferase-isomerase from Aromatoleum aromaticum (strain DSM 19018 / LMG 30748 / EbN1) (Azoarcus sp. (strain EbN1)).